The primary structure comprises 291 residues: Ribose-phosphate pyrophosphokinase (291 aa).

ATP is bound by residues 34–36 (DGE) and 93–94 (RQ). Mg(2+) is bound by residues H127 and D165. K188 is an active-site residue. Residues R190, D216, and 220–224 (STGGT) each bind D-ribose 5-phosphate.

This sequence belongs to the ribose-phosphate pyrophosphokinase family. Class III (archaeal) subfamily. Homodimer. Mg(2+) serves as cofactor.

Its subcellular location is the cytoplasm. The catalysed reaction is D-ribose 5-phosphate + ATP = 5-phospho-alpha-D-ribose 1-diphosphate + AMP + H(+). The protein operates within metabolic intermediate biosynthesis; 5-phospho-alpha-D-ribose 1-diphosphate biosynthesis; 5-phospho-alpha-D-ribose 1-diphosphate from D-ribose 5-phosphate (route I): step 1/1. In terms of biological role, involved in the biosynthesis of the central metabolite phospho-alpha-D-ribosyl-1-pyrophosphate (PRPP) via the transfer of pyrophosphoryl group from ATP to 1-hydroxyl of ribose-5-phosphate (Rib-5-P). In Saccharolobus solfataricus (strain ATCC 35092 / DSM 1617 / JCM 11322 / P2) (Sulfolobus solfataricus), this protein is Ribose-phosphate pyrophosphokinase.